The chain runs to 185 residues: Small ribosomal subunit protein uS5c (185 aa).

An S5 DRBM domain is found at Phe-26 to Ile-89.

The protein belongs to the universal ribosomal protein uS5 family. As to quaternary structure, part of the 30S ribosomal subunit. Contacts protein S4.

It is found in the plastid. The protein resides in the chloroplast. Functionally, with S4 and S12 plays an important role in translational accuracy. This is Small ribosomal subunit protein uS5c (rps5) from Trieres chinensis (Marine centric diatom).